The chain runs to 360 residues: Ferredoxin--NADP reductase 1 (360 aa).

7 residues coordinate FAD: aspartate 43, glutamine 51, tyrosine 56, alanine 96, phenylalanine 141, aspartate 307, and serine 348.

This sequence belongs to the ferredoxin--NADP reductase type 2 family. As to quaternary structure, homodimer. FAD is required as a cofactor.

The catalysed reaction is 2 reduced [2Fe-2S]-[ferredoxin] + NADP(+) + H(+) = 2 oxidized [2Fe-2S]-[ferredoxin] + NADPH. The sequence is that of Ferredoxin--NADP reductase 1 from Cupriavidus taiwanensis (strain DSM 17343 / BCRC 17206 / CCUG 44338 / CIP 107171 / LMG 19424 / R1) (Ralstonia taiwanensis (strain LMG 19424)).